The following is a 284-amino-acid chain: Tryptophan synthase alpha chain (284 aa).

Catalysis depends on proton acceptor residues E55 and D66.

It belongs to the TrpA family. As to quaternary structure, tetramer of two alpha and two beta chains.

The catalysed reaction is (1S,2R)-1-C-(indol-3-yl)glycerol 3-phosphate + L-serine = D-glyceraldehyde 3-phosphate + L-tryptophan + H2O. Its pathway is amino-acid biosynthesis; L-tryptophan biosynthesis; L-tryptophan from chorismate: step 5/5. The alpha subunit is responsible for the aldol cleavage of indoleglycerol phosphate to indole and glyceraldehyde 3-phosphate. The sequence is that of Tryptophan synthase alpha chain from Methanococcus voltae.